Here is a 155-residue protein sequence, read N- to C-terminus: UPF0178 protein ACICU_02858 (155 aa).

Positions 120–155 are disordered; it reads GAGVQTGGPPPISERDKREFSSALDQTILKQKRKTA.

It belongs to the UPF0178 family.

This is UPF0178 protein ACICU_02858 from Acinetobacter baumannii (strain ACICU).